The following is a 165-amino-acid chain: ATP synthase subunit b (165 aa).

The helical transmembrane segment at 5-25 (LVGITWEFVFQIVNTFIIFLL) threads the bilayer.

It belongs to the ATPase B chain family. F-type ATPases have 2 components, F(1) - the catalytic core - and F(0) - the membrane proton channel. F(1) has five subunits: alpha(3), beta(3), gamma(1), delta(1), epsilon(1). F(0) has three main subunits: a(1), b(2) and c(10-14). The alpha and beta chains form an alternating ring which encloses part of the gamma chain. F(1) is attached to F(0) by a central stalk formed by the gamma and epsilon chains, while a peripheral stalk is formed by the delta and b chains.

The protein resides in the cell membrane. Functionally, f(1)F(0) ATP synthase produces ATP from ADP in the presence of a proton or sodium gradient. F-type ATPases consist of two structural domains, F(1) containing the extramembraneous catalytic core and F(0) containing the membrane proton channel, linked together by a central stalk and a peripheral stalk. During catalysis, ATP synthesis in the catalytic domain of F(1) is coupled via a rotary mechanism of the central stalk subunits to proton translocation. Component of the F(0) channel, it forms part of the peripheral stalk, linking F(1) to F(0). The polypeptide is ATP synthase subunit b (Clostridioides difficile (strain 630) (Peptoclostridium difficile)).